Consider the following 197-residue polypeptide: Imidazoleglycerol-phosphate dehydratase (197 aa).

This sequence belongs to the imidazoleglycerol-phosphate dehydratase family.

It localises to the cytoplasm. It catalyses the reaction D-erythro-1-(imidazol-4-yl)glycerol 3-phosphate = 3-(imidazol-4-yl)-2-oxopropyl phosphate + H2O. Its pathway is amino-acid biosynthesis; L-histidine biosynthesis; L-histidine from 5-phospho-alpha-D-ribose 1-diphosphate: step 6/9. The sequence is that of Imidazoleglycerol-phosphate dehydratase from Rhodopseudomonas palustris (strain TIE-1).